The following is a 228-amino-acid chain: Probable septum site-determining protein MinC (228 aa).

It belongs to the MinC family. Interacts with MinD and FtsZ.

In terms of biological role, cell division inhibitor that blocks the formation of polar Z ring septums. Rapidly oscillates between the poles of the cell to destabilize FtsZ filaments that have formed before they mature into polar Z rings. Prevents FtsZ polymerization. This chain is Probable septum site-determining protein MinC, found in Yersinia enterocolitica serotype O:8 / biotype 1B (strain NCTC 13174 / 8081).